We begin with the raw amino-acid sequence, 787 residues long: LPS-assembly protein LptD (787 aa).

A signal peptide spans 1 to 39 (MPRKTLLPLVPACDAAPRRKRLAAALLAVPGLVPAVSQA).

Belongs to the LptD family. In terms of assembly, component of the lipopolysaccharide transport and assembly complex. Interacts with LptE and LptA.

Its subcellular location is the cell outer membrane. Functionally, together with LptE, is involved in the assembly of lipopolysaccharide (LPS) at the surface of the outer membrane. This is LPS-assembly protein LptD from Burkholderia thailandensis (strain ATCC 700388 / DSM 13276 / CCUG 48851 / CIP 106301 / E264).